The chain runs to 231 residues: MKKAVVVFSGGQDSTTCLVQALKEFDEVHAITFDYGQRHKLEIEVAQQLAKQLGVTAHKVMDVSLLNELAISSLTRDDIPVSHELQANGLPNSFVPGRNILFLTLAGIYAYQIGATTVITGVCETDFSGYPDCRDEFVQAMNQALAKGMDLPLMIRTPLMWLNKAETWALADQLGALDLVRHQTLTCYNGLIGDGCGECPACGLRQAGLKAYLDNRDLIMSALKSKQSAAH.

8–18 (FSGGQDSTTCL) is a binding site for ATP. Positions 187, 196, 199, and 202 each coordinate Zn(2+).

Belongs to the QueC family. It depends on Zn(2+) as a cofactor.

It carries out the reaction 7-carboxy-7-deazaguanine + NH4(+) + ATP = 7-cyano-7-deazaguanine + ADP + phosphate + H2O + H(+). The protein operates within purine metabolism; 7-cyano-7-deazaguanine biosynthesis. Functionally, catalyzes the ATP-dependent conversion of 7-carboxy-7-deazaguanine (CDG) to 7-cyano-7-deazaguanine (preQ(0)). The polypeptide is 7-cyano-7-deazaguanine synthase (Vibrio cholerae serotype O1 (strain ATCC 39541 / Classical Ogawa 395 / O395)).